Consider the following 986-residue polypeptide: Ephrin type-A receptor 4-A (986 aa).

An N-terminal signal peptide occupies residues 1 to 20; that stretch reads MAGIVHGILFCGLFGLCWAV. The Extracellular segment spans residues 21–547; it reads TGSRIYPASE…MIGEGASPTV (527 aa). An Eph LBD domain is found at 30-209; it reads EVTLLDSRSV…FYKKCPLTVR (180 aa). 2 consecutive Fibronectin type-III domains span residues 328 to 438 and 439 to 536; these read PPSA…TNQA and APST…TVPS. 2 N-linked (GlcNAc...) asparagine glycosylation sites follow: N340 and N407. Residues 548 to 569 traverse the membrane as a helical segment; sequence LLVSVAGSIVLVVILIAAFVIS. Over 570 to 986 the chain is Cytoplasmic; sequence RRRSKYSKAK…QQIQGRMVPV (417 aa). 2 positions are modified to phosphotyrosine; by autocatalysis: Y595 and Y601. One can recognise a Protein kinase domain in the interval 620-881; it reads IKIEKVIGVG…QIVSMLDKLI (262 aa). Residues 626-634 and K652 each bind ATP; that span reads IGVGEFGEV. D745 acts as the Proton acceptor in catalysis. A phosphotyrosine; by autocatalysis mark is found at Y778 and Y928. The SAM domain occupies 911–975; sequence SQVASVLDWL…LSSVQGMRTQ (65 aa). A PDZ-binding motif is present at residues 984–986; the sequence is VPV.

It belongs to the protein kinase superfamily. Tyr protein kinase family. Ephrin receptor subfamily.

It localises to the cell membrane. It is found in the early endosome. The enzyme catalyses L-tyrosyl-[protein] + ATP = O-phospho-L-tyrosyl-[protein] + ADP + H(+). Receptor tyrosine kinase which binds membrane-bound ephrin family ligands residing on adjacent cells, leading to contact-dependent bidirectional signaling into neighboring cells. The signaling pathway downstream of the receptor is referred to as forward signaling while the signaling pathway downstream of the ephrin ligand is referred to as reverse signaling. Highly promiscuous, it has the unique property among Eph receptors to bind and to be physiologically activated by both GPI-anchored ephrin-A and transmembrane ephrin-B ligands including EFNA1 and EFNB3. Upon activation by ephrin ligands, modulates cell morphology and integrin-dependent cell adhesion through regulation of the Rac, Rap and Rho GTPases activity. Plays an important role in the development of the nervous system controlling different steps of axonal guidance including the establishment of the corticospinal projections. The protein is Ephrin type-A receptor 4-A (epha4-a) of Xenopus laevis (African clawed frog).